Consider the following 855-residue polypeptide: MTDLSQHTPMMQQYFKLKHQHPDQLMFYRMGDFYELFYEDAKKAAKLLDITLTARGQSGGKAIPMAGIPFHSAEGYLAKLVKLGESVAICEQIGDPATSKGPVERQVVRIITPGTVSDEALLDERRDNLLAAILGDERLFGLAVLDITSGRFSVQEIKGWETLLAELERLNPAELLIPDDWPQGLPAEKRRGVRRRAPWDFDRDSAHKSLCQQFGTQDLKGFGCQNLTLAIGAAGCLLAYAKETQRTALPHLRSLRHDRLDDTVILDGASRRNLELDINLSGGRENTLQSVVDRCQTAMASRLMSRWLNRPLRDRAVLEARQESIACLLERYRFENLQPQLKEIGDLERILARIGLRNARPRDLARLRDALAALPDLQNAMTELEAPHLQALATTIGTYPELAELLAKAIIDNPPAVIRDGGVIKTGYDAELDELQALSENAGQFLMDLEAREKARTGLPNLKVGYNRIHGYFIELPRVQAEQAPADYIRRQTLKGAERFITPELKAFEDKALSAQSRALAREKALYEELLERLIGHLAPLQDSASALAELDVLANLAERALNLDLNRPRFVEHTCLHIEQGRHPVVEQVLETPFVANDLALDADTRMLVITGPNMGGKSTYMRQTALIVLLAHIGSFVPAARCELSLVDRIFTRIGSSDDLAGGRSTFMVEMSETANILHNATDKSLVLMDEVGRGTSTFDGLSLAWAAAEDLARTRAFTLFATHYFELTVLPESQPAVANVHLNATEHNERIVFLHHVLPGPASQSYGLAVAQLAGVPSPVIQRAREHLKRLETTSLPHEVPSQQSGKPASPMQSDLFASLPHPVIDELSRINPDDISPRQALDLLYAWKMRV.

Residue 613–620 (GPNMGGKS) coordinates ATP. The interval 795-816 (ETTSLPHEVPSQQSGKPASPMQ) is disordered. Positions 796–816 (TTSLPHEVPSQQSGKPASPMQ) are enriched in polar residues.

The protein belongs to the DNA mismatch repair MutS family.

In terms of biological role, this protein is involved in the repair of mismatches in DNA. It is possible that it carries out the mismatch recognition step. This protein has a weak ATPase activity. The chain is DNA mismatch repair protein MutS from Pseudomonas paraeruginosa (strain DSM 24068 / PA7) (Pseudomonas aeruginosa (strain PA7)).